A 131-amino-acid polypeptide reads, in one-letter code: uncharacterized protein (131 aa).

Residues 60–100 (GRHTLSQVPNKGHEKASAVQLPEKQGTDQSRRGPTSAVTKA) form a disordered region. Residues 91-100 (RGPTSAVTKA) show a composition bias toward polar residues.

This is an uncharacterized protein from Homo sapiens (Human).